The sequence spans 104 residues: MSYAIFKHGGKQYKVVEGDIVLLDKMDKEPKALVELVEVLAVSKEGKLSFGKPFVNGAKIEAEVINEGRGKKVITFKKRRRKDSKTKRGFRRDFTRVRITKIVA.

The protein belongs to the bacterial ribosomal protein bL21 family. In terms of assembly, part of the 50S ribosomal subunit. Contacts protein L20.

This protein binds to 23S rRNA in the presence of protein L20. The sequence is that of Large ribosomal subunit protein bL21 from Helicobacter pylori (strain HPAG1).